A 329-amino-acid polypeptide reads, in one-letter code: Biotin synthase (329 aa).

The 231-residue stretch at 48–278 (FLGNGVDLCS…TKKIAVCGGR (231 aa)) folds into the Radical SAM core domain. The [4Fe-4S] cluster site is built by Cys66, Cys70, and Cys73. [2Fe-2S] cluster is bound by residues Ser143 and Cys203.

Belongs to the radical SAM superfamily. Biotin synthase family. As to quaternary structure, homodimer. It depends on [4Fe-4S] cluster as a cofactor. [2Fe-2S] cluster is required as a cofactor.

It catalyses the reaction (4R,5S)-dethiobiotin + (sulfur carrier)-SH + 2 reduced [2Fe-2S]-[ferredoxin] + 2 S-adenosyl-L-methionine = (sulfur carrier)-H + biotin + 2 5'-deoxyadenosine + 2 L-methionine + 2 oxidized [2Fe-2S]-[ferredoxin]. It functions in the pathway cofactor biosynthesis; biotin biosynthesis; biotin from 7,8-diaminononanoate: step 2/2. Catalyzes the conversion of dethiobiotin (DTB) to biotin by the insertion of a sulfur atom into dethiobiotin via a radical-based mechanism. This chain is Biotin synthase, found in Geobacter metallireducens (strain ATCC 53774 / DSM 7210 / GS-15).